Here is a 355-residue protein sequence, read N- to C-terminus: Peptide chain release factor 1 (355 aa).

Gln-231 carries the N5-methylglutamine modification. Residues 280–291 are compositionally biased toward basic and acidic residues; sequence SERLAKESEARK. Residues 280 to 303 are disordered; sequence SERLAKESEARKSQVGSGDRSERI.

This sequence belongs to the prokaryotic/mitochondrial release factor family. Post-translationally, methylated by PrmC. Methylation increases the termination efficiency of RF1.

Its subcellular location is the cytoplasm. Peptide chain release factor 1 directs the termination of translation in response to the peptide chain termination codons UAG and UAA. The protein is Peptide chain release factor 1 of Campylobacter jejuni subsp. jejuni serotype O:2 (strain ATCC 700819 / NCTC 11168).